Reading from the N-terminus, the 350-residue chain is 3'-hydroxy-N-methyl-(S)-coclaurine 4'-O-methyltransferase (350 aa).

The S-adenosyl-L-methionine site is built by G196, D219, D239, M240, and K253. H257 (proton acceptor) is an active-site residue.

This sequence belongs to the class I-like SAM-binding methyltransferase superfamily. Cation-independent O-methyltransferase family. COMT subfamily. Homodimer.

The catalysed reaction is (S)-3'-hydroxy-N-methylcoclaurine + S-adenosyl-L-methionine = (S)-reticuline + S-adenosyl-L-homocysteine + H(+). It functions in the pathway alkaloid biosynthesis; (S)-reticuline biosynthesis; (S)-reticuline from (S)-norcoclaurine: step 4/4. Catalyzes the transfer of the methyl group to the 4'-hydroxyl group of 3'-hydroxy-N-methylcoclaurine to form reticuline. The protein is 3'-hydroxy-N-methyl-(S)-coclaurine 4'-O-methyltransferase of Coptis japonica (Japanese goldthread).